Consider the following 396-residue polypeptide: S-adenosylmethionine synthase (396 aa).

Glu-11 contributes to the Mg(2+) binding site. ATP is bound at residue His-17. Glu-45 serves as a coordination point for K(+). 2 residues coordinate L-methionine: Glu-58 and Gln-101. Residues 169–171 (DGK), 237–240 (SGRF), Asp-248, 254–255 (RK), Ala-271, Lys-275, and Lys-279 contribute to the ATP site. Residue Asp-248 coordinates L-methionine. Lys-279 contacts L-methionine.

This sequence belongs to the AdoMet synthase family. In terms of assembly, homotetramer. The cofactor is Mn(2+). Mg(2+) serves as cofactor. Co(2+) is required as a cofactor. Requires K(+) as cofactor.

It is found in the cytoplasm. The enzyme catalyses L-methionine + ATP + H2O = S-adenosyl-L-methionine + phosphate + diphosphate. It functions in the pathway amino-acid biosynthesis; S-adenosyl-L-methionine biosynthesis; S-adenosyl-L-methionine from L-methionine: step 1/1. Its function is as follows. Catalyzes the formation of S-adenosylmethionine from methionine and ATP. The reaction comprises two steps that are both catalyzed by the same enzyme: formation of S-adenosylmethionine (AdoMet) and triphosphate, and subsequent hydrolysis of the triphosphate. The sequence is that of S-adenosylmethionine synthase (SAMS) from Medicago sativa subsp. falcata (Sickle medic).